The sequence spans 448 residues: MTIFQFPQDFMWGTATAAYQIEGAYQEDGRGLSIWDTFAHTPGKVFNGDNGNVACDSYHRYEEDIRLMKELGIRTYRFSVSWPRIFPNGDGEVNQEGLDYYHRVVDLLNDNGIEPFCTLYHWDLPQALQDAGGWGNRRTIQAFVQFAETMFREFHGKIQHWLTFNEPWCIAFLSNMLGVHAPGLTNLQTAIDVGHHLLVAHGLSVRRFRELGTSGQIGIAPNVSWAVPYSTSEEDKAACARTISLHSDWFLQPIYQGSYPQFLVDWFAEQGATVPIQDGDMDIIGEPIDMIGINYYSMSVNRFNPEAGFLQSEEINMGLPVTDIGWPVESRGLYEVLHYLQKYGNIDIYITENGACINDEVVNGKVQDDRRISYMQQHLVQVHRTIHDGLHVKGYMAWSLLDNFEWAEGYNMRFGMIHVDFRTQVRTPKESYYWYRNVVSNNWLETRR.

Glutamate 166 functions as the Proton donor in the catalytic mechanism. Glutamate 352 serves as the catalytic Nucleophile.

This sequence belongs to the glycosyl hydrolase 1 family. As to quaternary structure, homooctamer.

The catalysed reaction is Hydrolysis of terminal, non-reducing beta-D-glucosyl residues with release of beta-D-glucose.. Functionally, bglA is intracellular and cleaves cellobiose probably through inorganic phosphate mediated hydrolysis. The polypeptide is Beta-glucosidase A (bglA) (Paenibacillus polymyxa (Bacillus polymyxa)).